A 414-amino-acid chain; its full sequence is Putative dipeptidase TRV_05564 (414 aa).

The N-terminal stretch at 1-20 (MAALFVSLLALTSLVPVQGA) is a signal peptide. Positions 45, 47, and 157 each coordinate Zn(2+). Residues C96 and C186 are joined by a disulfide bond. H184 serves as a coordination point for substrate. Zn(2+) contacts are provided by H228 and H249. Positions 260 and 320 each coordinate substrate. Residue N392 is glycosylated (N-linked (GlcNAc...) asparagine).

The protein belongs to the metallo-dependent hydrolases superfamily. Peptidase M19 family. Zn(2+) serves as cofactor.

The enzyme catalyses an L-aminoacyl-L-amino acid + H2O = 2 an L-alpha-amino acid. Functionally, hydrolyzes a wide range of dipeptides. The protein is Putative dipeptidase TRV_05564 of Trichophyton verrucosum (strain HKI 0517).